Here is a 681-residue protein sequence, read N- to C-terminus: Rabphilin-3A (681 aa).

The tract at residues 1 to 21 (MTDTVVNRWMYPGDGPLQSND) is disordered. Positions 40 to 157 (QRKQEELTDE…KRSGAWFFKG (118 aa)) constitute a RabBD domain. An FYVE-type zinc finger spans residues 88-145 (GDGVNRCILCGEQLGMLGSACVVCEDCKKNVCTKCGVETSNNRPHPVWLCKICLEQRE). Zn(2+) is bound by residues cysteine 94, cysteine 97, cysteine 111, cysteine 114, cysteine 119, cysteine 122, cysteine 137, and cysteine 140. Positions 162–375 (VLPQPMPIKK…EEEANSYDSD (214 aa)) are disordered. The segment covering 199–208 (ARGDMEDRRP) has biased composition (basic and acidic residues). Arginine 223 is modified (omega-N-methylarginine). A compositionally biased stretch (basic and acidic residues) spans 243-252 (RDSEGWDHAH). Serine 271 bears the Phosphoserine mark. Over residues 278 to 296 (APAPVPSPAPPQPVQPGPP) the composition is skewed to pro residues. The span at 347–356 (AAPYSQAAPA) shows a compositional bias: low complexity. Acidic residues predominate over residues 362–375 (AEEEEEEANSYDSD). The 123-residue stretch at 379 to 501 (TLGALEFSLL…KANQRKNFNI (123 aa)) folds into the C2 1 domain. 14 residues coordinate Ca(2+): methionine 409, aspartate 410, aspartate 416, aspartate 471, glutamate 472, aspartate 473, glutamate 479, glutamate 526, aspartate 568, aspartate 574, aspartate 628, tyrosine 629, aspartate 630, and aspartate 636. A C2 2 domain is found at 537–670 (ERGKILVSLM…NKDKKIERWH (134 aa)). 2 positions are modified to phosphoserine: serine 679 and serine 680.

As to quaternary structure, interacts with RAB3B, RAB3C, RAB3D, RAB8A, RAB27A and RAB27B. Interacts with RAB3A; this interaction recruits RPH3A to synaptic vesicules. Interacts (via C2B domain) with SNAP25. Interacts with deubiquitinating enzyme CAND1; this interaction results in the deubiquitination of RPH3A. Interacts with GRIN2A and DLG4; this ternary complex regulates NMDA receptor composition at postsynaptic membranes. Interacts with SNCA. It depends on Ca(2+) as a cofactor. Post-translationally, ubiquitinated. Deubiquitinated by CAND1 to prevent its degradation. Specifically expressed in brain.

It is found in the cytoplasmic vesicle. The protein localises to the secretory vesicle. The protein resides in the synaptic vesicle membrane. It localises to the cell projection. Its subcellular location is the dendritic spine. It is found in the postsynaptic cell membrane. The protein localises to the membrane. Its function is as follows. Plays an essential role in docking and fusion steps of regulated exocytosis. At the presynaptic level, RPH3A is recruited by RAB3A to the synaptic vesicle membrane in a GTP-dependent manner where it modulates synaptic vesicle trafficking and calcium-triggered neurotransmitter release. In the post-synaptic compartment, forms a ternary complex with GRIN2A and DLG4 and regulates NMDA receptor stability. Also plays a role in the exocytosis of arginine vasopressin hormone. This is Rabphilin-3A (Rph3a) from Mus musculus (Mouse).